Here is a 380-residue protein sequence, read N- to C-terminus: Flap endonuclease 1 (380 aa).

The tract at residues 1–104 (MGIHGLTKLI…AELEKRGEKR (104 aa)) is N-domain. A Mg(2+)-binding site is contributed by D34. DNA is bound by residues R47 and R70. Residues D86, E158, E160, D179, and D181 each coordinate Mg(2+). The I-domain stretch occupies residues 122 to 253 (NIDKFSKRLV…KRAIDLIKQH (132 aa)). E158 is a DNA binding site. Residues G231 and D233 each coordinate DNA. D233 serves as a coordination point for Mg(2+). Positions 336 to 344 (TQGRLDSFF) are interaction with PCNA. Positions 351 to 380 (SSKRKEPELKGSAKKKQKTGATPGKFKKGK) are disordered.

The protein belongs to the XPG/RAD2 endonuclease family. FEN1 subfamily. Interacts with PCNA. Three molecules of fen1 bind to one PCNA trimer with each molecule binding to one PCNA monomer. PCNA stimulates the nuclease activity without altering cleavage specificity. The cofactor is Mg(2+). In terms of processing, phosphorylated. Phosphorylation upon DNA damage induces relocalization to the nuclear plasma.

It localises to the nucleus. The protein resides in the nucleolus. The protein localises to the nucleoplasm. It is found in the mitochondrion. In terms of biological role, structure-specific nuclease with 5'-flap endonuclease and 5'-3' exonuclease activities involved in DNA replication and repair. During DNA replication, cleaves the 5'-overhanging flap structure that is generated by displacement synthesis when DNA polymerase encounters the 5'-end of a downstream Okazaki fragment. It enters the flap from the 5'-end and then tracks to cleave the flap base, leaving a nick for ligation. Also involved in the long patch base excision repair (LP-BER) pathway, by cleaving within the apurinic/apyrimidinic (AP) site-terminated flap. Acts as a genome stabilization factor that prevents flaps from equilibrating into structures that lead to duplications and deletions. Also possesses 5'-3' exonuclease activity on nicked or gapped double-stranded DNA, and exhibits RNase H activity. Also involved in replication and repair of rDNA and in repairing mitochondrial DNA. The protein is Flap endonuclease 1 (fen1) of Anoplopoma fimbria (Sablefish).